The following is a 1948-amino-acid chain: MAPTWGPGMVSVVGPMGLLVVLLVGGCAAEEPPRFIKEPKDQIGVSGGVASFVCQATGDPKPRVTWNKKGKKVNSQRFETIEFDESAGAVLRIQPLRTPRDENVYECVAQNSVGEITVHAKLTVLREDQLPSGFPNIDMGPQLKVVERTRTATMLCAASGNPDPEITWFKDFLPVDPSASNGRIKQLRSETFESTPIRGALQIESSEETDQGKYECVATNSAGVRYSSPANLYVRELREVRRVAPRFSILPMSHEIMPGGNVNITCVAVGSPMPYVKWMQGAEDLTPEDDMPVGRNVLELTDVKDSANYTCVAMSSLGVIEAVAQITVKSLPKAPGTPMVTENTATSITITWDSGNPDPVSYYVIEYKSKSQDGPYQIKEDITTTRYSIGGLSPNSEYEIWVSAVNSIGQGPPSESVVTRTGEQAPASAPRNVQARMLSATTMIVQWEEPVEPNGLIRGYRVYYTMEPEHPVGNWQKHNVDDSLLTTVGSLLEDETYTVRVLAFTSVGDGPLSDPIQVKTQQGVPGQPMNLRAEARSETSITLSWSPPRQESIIKYELLFREGDHGREVGRTFDPTTSYVVEDLKPNTEYAFRLAARSPQGLGAFTPVVRQRTLQSKPSAPPQDVKCVSVRSTAILVSWRPPPPETHNGALVGYSVRYRPLGSEDPEPKEVNGIPPTTTQILLEALEKWTQYRITTVAHTEVGPGPESSPVVVRTDEDVPSAPPRKVEAEALNATAIRVLWRSPAPGRQHGQIRGYQVHYVRMEGAEARGPPRIKDVMLADAQWETDDTAEYEMVITNLQPETAYSITVAAYTMKGDGARSKPKVVVTKGAVLGRPTLSVQQTPEGSLLARWEPPAGTAEDQVLGYRLQFGREDSTPLATLEFPPSEDRYTASGVHKGATYVFRLAARSRGGLGEEAAEVLSIPEDTPRGHPQILEAAGNASAGTVLLRWLPPVPAERNGAIVKYTVAVREAGALGPARETELPAAAEPGAENALTLQGLKPDTAYDLQVRAHTRRGPGPFSPPVRYRTFLRDQVSPKNFKVKMIMKTSVLLSWEFPDNYNSPTPYKIQYNGLTLDVDGRTTKKLITHLKPHTFYNFVLTNRGSSLGGLQQTVTAWTAFNLLNGKPSVAPKPDADGFIMVYLPDGQSPVPVQSYFIVMVPLRKSRGGQFLTPLGSPEDMDLEELIQDISRLQRRSLRHSRQLEVPRPYIAARFSVLPPTFHPGDQKQYGGFDNRGLEPGHRYVLFVLAVLQKSEPTFAASPFSDPFQLDNPDPQPIVDGEEGLIWVIGPVLAVVFIICIVIAILLYKNKPDSKRKDSEPRTKCLLNNADLAPHHPKDPVEMRRINFQTPDSGLRSPLREPGFHFESMLSHPPIPIADMAEHTERLKANDSLKLSQEYESIDPGQQFTWEHSNLEVNKPKNRYANVIAYDHSRVILQPIEGIMGSDYINANYVDGYRCQNAYIATQGPLPETFGDFWRMVWEQRSATIVMMTRLEEKSRIKCDQYWPNRGTETYGFIQVTLLDTIELATFCVRTFSLHKNGSSEKREVRQFQFTAWPDHGVPEYPTPFLAFLRRVKTCNPPDAGPIVVHCSAGVGRTGCFIVIDAMLERIKPEKTVDVYGHVTLMRSQRNYMVQTEDQYSFIHEALLEAVGCGNTEVPARSLYAYIQKLAQVEPGEHVTGMELEFKRLANSKAHTSRFISANLPCNKFKNRLVNIMPYESTRVCLQPIRGVEGSDYINASFIDGYRQQKAYIATQGPLAETTEDFWRMLWENNSTIVVMLTKLREMGREKCHQYWPAERSARYQYFVVDPMAEYNMPQYILREFKVTDARDGQSRTVRQFQFTDWPEQGVPKSGEGFIDFIGQVHKTKEQFGQDGPISVHCSAGVGRTGVFITLSIVLERMRYEGVVDIFQTVKMLRTQRPAMVQTEDEYQFCYQAALEYLGSFDHYAT.

Positions 1 to 29 are cleaved as a signal peptide; it reads MAPTWGPGMVSVVGPMGLLVVLLVGGCAA. Residues 30-1282 are Extracellular-facing; sequence EEPPRFIKEP…PQPIVDGEEG (1253 aa). Ig-like C2-type domains lie at 33 to 123, 135 to 233, and 245 to 327; these read PRFI…AKLT, PNID…ANLY, and PRFS…AQIT. Intrachain disulfides connect Cys54–Cys107 and Cys156–Cys216. Positions 68 to 72 are important for binding to glycosaminoglycan chains; sequence KKGKK. Asn263 and Asn308 each carry an N-linked (GlcNAc...) asparagine glycan. A disulfide bridge connects residues Cys266 and Cys311. Fibronectin type-III domains follow at residues 334-424, 429-523, 527-616, 621-718, 723-831, 832-930, 931-1033, and 1036-1120; these read APGT…TGEQ, APRN…TQQG, QPMN…TLQS, PPQD…TDED, PPRK…TKGA, VLGR…TPRG, HPQI…FLRD, and SPKN…TAFN. The tract at residues 700-724 is disordered; that stretch reads TEVGPGPESSPVVVRTDEDVPSAPP. A compositionally biased stretch (low complexity) spans 701–713; it reads EVGPGPESSPVVV. Asn733 carries N-linked (GlcNAc...) asparagine glycosylation. Residue Asn940 is glycosylated (N-linked (GlcNAc...) asparagine). The chain crosses the membrane as a helical span at residues 1283–1303; it reads LIWVIGPVLAVVFIICIVIAI. Residues 1304–1948 lie on the Cytoplasmic side of the membrane; sequence LLYKNKPDSK…YLGSFDHYAT (645 aa). 2 stretches are compositionally biased toward basic and acidic residues: residues 1311-1321 and 1331-1340; these read DSKRKDSEPRT and APHHPKDPVE. The interval 1311–1340 is disordered; it reads DSKRKDSEPRTKCLLNNADLAPHHPKDPVE. 2 Tyrosine-protein phosphatase domains span residues 1393 to 1648 and 1680 to 1939; these read LSQE…LLEA and MELE…ALEY. Residues Asp1557, 1589–1595, and Gln1633 each bind substrate; that span reads CSAGVGR. The active-site Phosphocysteine intermediate is Cys1589. Catalysis depends on Cys1880, which acts as the Phosphocysteine intermediate.

The protein belongs to the protein-tyrosine phosphatase family. Receptor class 2A subfamily. In terms of assembly, binding to large heparan sulfate proteoglycan structures promotes oligomerization. Binding to chondroitin sulfate proteoglycan does not lead to oligomerization. Interacts (via Ig-like domains) with NTRK3. Interacts (via Ig-like domains) with NTRK1, but does not form detectable complexes with NTRK2. Interacts with PPFIA1, PPFIA2 and PPFIA3. A cleavage occurs, separating the extracellular domain from the transmembrane segment. This process called 'ectodomain shedding' is thought to be involved in receptor desensitization, signal transduction and/or membrane localization. In terms of tissue distribution, detected in peripheral blood plasmacytoid dendritic cells (at protein level). Detected in all tissues tested except for placenta and liver. Detected in peripheral blood plasmacytoid dendritic cells.

The protein resides in the cell membrane. It localises to the cell projection. Its subcellular location is the axon. The protein localises to the perikaryon. It is found in the cytoplasmic vesicle. The protein resides in the secretory vesicle. It localises to the synaptic vesicle membrane. Its subcellular location is the synapse. The protein localises to the synaptosome. It is found in the postsynaptic density. The protein resides in the neuron projection. It localises to the growth cone. The enzyme catalyses O-phospho-L-tyrosyl-[protein] + H2O = L-tyrosyl-[protein] + phosphate. Cell surface receptor that binds to glycosaminoglycans, including chondroitin sulfate proteoglycans and heparan sulfate proteoglycan. Binding to chondroitin sulfate and heparan sulfate proteoglycans has opposite effects on PTPRS oligomerization and regulation of neurite outgrowth. Contributes to the inhibition of neurite and axonal outgrowth by chondroitin sulfate proteoglycans, also after nerve transection. Plays a role in stimulating neurite outgrowth in response to the heparan sulfate proteoglycan GPC2. Required for normal brain development, especially for normal development of the pituitary gland and the olfactory bulb. Functions as a tyrosine phosphatase. Mediates dephosphorylation of NTRK1, NTRK2 and NTRK3. Plays a role in down-regulation of signaling cascades that lead to the activation of Akt and MAP kinases. Down-regulates TLR9-mediated activation of NF-kappa-B, as well as production of TNF, interferon alpha and interferon beta. The protein is Receptor-type tyrosine-protein phosphatase S (PTPRS) of Homo sapiens (Human).